Consider the following 368-residue polypeptide: Probable dual-specificity RNA methyltransferase RlmN (368 aa).

Catalysis depends on E109, which acts as the Proton acceptor. The 241-residue stretch at 115-355 (YPDRVTMCIS…VTIRDTRGQE (241 aa)) folds into the Radical SAM core domain. Residues C122 and C360 are joined by a disulfide bond. Residues C129, C133, and C136 each contribute to the [4Fe-4S] cluster site. S-adenosyl-L-methionine contacts are provided by residues 184-185 (GE), S218, 241-243 (SLH), and N317. Catalysis depends on C360, which acts as the S-methylcysteine intermediate.

This sequence belongs to the radical SAM superfamily. RlmN family. Requires [4Fe-4S] cluster as cofactor.

It localises to the cytoplasm. The enzyme catalyses adenosine(2503) in 23S rRNA + 2 reduced [2Fe-2S]-[ferredoxin] + 2 S-adenosyl-L-methionine = 2-methyladenosine(2503) in 23S rRNA + 5'-deoxyadenosine + L-methionine + 2 oxidized [2Fe-2S]-[ferredoxin] + S-adenosyl-L-homocysteine. The catalysed reaction is adenosine(37) in tRNA + 2 reduced [2Fe-2S]-[ferredoxin] + 2 S-adenosyl-L-methionine = 2-methyladenosine(37) in tRNA + 5'-deoxyadenosine + L-methionine + 2 oxidized [2Fe-2S]-[ferredoxin] + S-adenosyl-L-homocysteine. In terms of biological role, specifically methylates position 2 of adenine 2503 in 23S rRNA and position 2 of adenine 37 in tRNAs. The sequence is that of Probable dual-specificity RNA methyltransferase RlmN from Streptomyces coelicolor (strain ATCC BAA-471 / A3(2) / M145).